The sequence spans 144 residues: Large ribosomal subunit protein uL15 (144 aa).

The tract at residues 1 to 59 is disordered; sequence MHLNTLAPAPGAKKSSKRVGRGMGSGLGKTGGRGHKGQKSRSGGSVKPGFEGGQMPIQR. Over residues 21–31 the composition is skewed to gly residues; that stretch reads RGMGSGLGKTG.

Belongs to the universal ribosomal protein uL15 family. In terms of assembly, part of the 50S ribosomal subunit.

Binds to the 23S rRNA. The chain is Large ribosomal subunit protein uL15 from Pseudoalteromonas atlantica (strain T6c / ATCC BAA-1087).